A 363-amino-acid chain; its full sequence is MTKQTIRVELTSTKKPKPDPNQLSFGRVFTDHMFVMDYAADKGWYDPRIIPYQPLSMDPAAMVYHYGQTVFEGLKAYVSEDDHVLLFRPEKNMERLNQSNDRLCIPQIDEEQVLEGLKQLVAIDKDWIPNAEGTSLYIRPFIIATEPFLGVAASHTYKLLIILSPVGSYYKEGIKPVKIAVESEFVRAVKGGTGNAKTAGNYASSLKAQQVAEEKGFSQVLWLDGIEKKYIEEVGSMNIFFKINGEIVTPMLNGSILEGITRNSVIALLKHWGLQVSERKIAIDEVIQAHKDGILEEAFGTGTAAVISPVGELIWQDETLSINNGETGEIAKKLYDTITGIQKGAVADEFGWTTEVAALTESK.

Position 197 is an N6-(pyridoxal phosphate)lysine (Lys-197).

It belongs to the class-IV pyridoxal-phosphate-dependent aminotransferase family. Requires pyridoxal 5'-phosphate as cofactor.

It carries out the reaction L-leucine + 2-oxoglutarate = 4-methyl-2-oxopentanoate + L-glutamate. The catalysed reaction is L-isoleucine + 2-oxoglutarate = (S)-3-methyl-2-oxopentanoate + L-glutamate. The enzyme catalyses L-valine + 2-oxoglutarate = 3-methyl-2-oxobutanoate + L-glutamate. Its pathway is amino-acid biosynthesis; L-isoleucine biosynthesis; L-isoleucine from 2-oxobutanoate: step 4/4. It participates in amino-acid biosynthesis; L-leucine biosynthesis; L-leucine from 3-methyl-2-oxobutanoate: step 4/4. The protein operates within amino-acid biosynthesis; L-valine biosynthesis; L-valine from pyruvate: step 4/4. With respect to regulation, inhibited by canaline. Transaminates branched-chain amino acids and ketoglutarate. The polypeptide is Branched-chain-amino-acid aminotransferase 2 (ilvK) (Bacillus subtilis (strain 168)).